Reading from the N-terminus, the 73-residue chain is Large ribosomal subunit protein bL31 (73 aa).

4 residues coordinate Zn(2+): Cys16, Cys18, Cys38, and Cys41.

Belongs to the bacterial ribosomal protein bL31 family. Type A subfamily. Part of the 50S ribosomal subunit. The cofactor is Zn(2+).

Functionally, binds the 23S rRNA. This Vibrio vulnificus (strain YJ016) protein is Large ribosomal subunit protein bL31.